The chain runs to 72 residues: SRY-related protein AES1 (72 aa).

A DNA-binding region (HMG box) is located at residues 1-69 (VKRPMNAFMV…KHMADYPDYK (69 aa)).

The protein localises to the nucleus. The chain is SRY-related protein AES1 from Alligator mississippiensis (American alligator).